The chain runs to 381 residues: Protein COS6 (381 aa).

Topologically, residues 1–42 (MKENELKNEKSVDVLSVKQLESQKTVLPQDLFRSSFTWFCYE) are cytoplasmic. The chain crosses the membrane as a helical span at residues 43 to 63 (IYKSLVFRIWMLLWLPLSVWW). The Extracellular segment spans residues 64–69 (KLSNNW). Residues 70–90 (IYPLMVSLLVLFWGPVFVLVI) traverse the membrane as a helical segment. Residues 91–381 (FRLSRKRSLS…QLSCSEESLA (291 aa)) lie on the Cytoplasmic side of the membrane.

It belongs to the DUP/COS family.

It localises to the membrane. The chain is Protein COS6 (COS6) from Saccharomyces cerevisiae (strain ATCC 204508 / S288c) (Baker's yeast).